The following is a 254-amino-acid chain: MLRTRPRSPSADPAPCWSPQTPAPSPAKRRRLHQEPACPEPLAQPELEAPAEPTTSVVFLAAGSALQLPLDGVDLLLEPEPTSVLQVSLQGHTILLVPEGLQDSTHFGQPGFVAISPQGAAAQDGPQDHLVGLQEETFCEYFYQEDVCDEDADLEFLEHWASPPDDQANGNFSSIPGVPSPLSQDQVPGPSTGAEQYSPRFIWELDINMLGPFPGSPLQPLPPSPSRNPQEQLPPCPPCSPRAPRRARKRLVYE.

Disordered stretches follow at residues 1–50, 161–196, and 212–254; these read MLRT…LEAP, ASPP…GAEQ, and PFPG…LVYE. Residues 35 to 50 show a composition bias toward low complexity; that stretch reads EPACPEPLAQPELEAP. The segment covering 214–241 has biased composition (pro residues); it reads PGSPLQPLPPSPSRNPQEQLPPCPPCSP. Residues 243–254 are compositionally biased toward basic residues; the sequence is APRRARKRLVYE.

Belongs to the PRR23 family.

This Mus musculus (Mouse) protein is Proline-rich protein 23A3.